Here is a 416-residue protein sequence, read N- to C-terminus: Gamma-glutamyl phosphate reductase (416 aa).

This sequence belongs to the gamma-glutamyl phosphate reductase family.

It is found in the cytoplasm. It carries out the reaction L-glutamate 5-semialdehyde + phosphate + NADP(+) = L-glutamyl 5-phosphate + NADPH + H(+). It functions in the pathway amino-acid biosynthesis; L-proline biosynthesis; L-glutamate 5-semialdehyde from L-glutamate: step 2/2. In terms of biological role, catalyzes the NADPH-dependent reduction of L-glutamate 5-phosphate into L-glutamate 5-semialdehyde and phosphate. The product spontaneously undergoes cyclization to form 1-pyrroline-5-carboxylate. The chain is Gamma-glutamyl phosphate reductase from Leptospira interrogans serogroup Icterohaemorrhagiae serovar Lai (strain 56601).